Consider the following 202-residue polypeptide: Na(+)-translocating NADH-quinone reductase subunit E (202 aa).

The next 6 membrane-spanning stretches (helical) occupy residues 11–31 (AVFI…FLAV), 35–55 (VTTS…SVPV), 81–101 (FLRF…LEMA), 114–134 (GIFL…SFMV), 144–164 (VVYG…LAGI), and 180–200 (LGIT…FSGI).

It belongs to the NqrDE/RnfAE family. Composed of six subunits; NqrA, NqrB, NqrC, NqrD, NqrE and NqrF.

The protein localises to the cell inner membrane. It catalyses the reaction a ubiquinone + n Na(+)(in) + NADH + H(+) = a ubiquinol + n Na(+)(out) + NAD(+). In terms of biological role, NQR complex catalyzes the reduction of ubiquinone-1 to ubiquinol by two successive reactions, coupled with the transport of Na(+) ions from the cytoplasm to the periplasm. NqrA to NqrE are probably involved in the second step, the conversion of ubisemiquinone to ubiquinol. This Pseudoalteromonas translucida (strain TAC 125) protein is Na(+)-translocating NADH-quinone reductase subunit E.